The sequence spans 79 residues: Polcalcin Bra r 1 (79 aa).

2 consecutive EF-hand domains span residues 1–36 (MADA…LGSV) and 39–71 (DDVT…NPGL). Residues Asp-14, Asp-16, Asp-18, Lys-20, Glu-25, Asp-49, Asp-51, Asp-53, Asn-55, and Glu-60 each coordinate Ca(2+).

This Brassica campestris (Field mustard) protein is Polcalcin Bra r 1.